We begin with the raw amino-acid sequence, 85 residues long: Defensin-like protein 76 (85 aa).

An N-terminal signal peptide occupies residues 1–27 (MQNQKHSHILTAITIVLLFAMAAKINA). Disulfide bonds link C35–C70, C40–C59, C44–C68, and C48–C69.

This sequence belongs to the DEFL family.

It localises to the secreted. The protein is Defensin-like protein 76 (LCR86) of Arabidopsis thaliana (Mouse-ear cress).